We begin with the raw amino-acid sequence, 129 residues long: NADH-quinone oxidoreductase subunit A (129 aa).

A run of 3 helical transmembrane segments spans residues 9–29 (FPIG…LGLA), 68–88 (LLFI…VLLL), and 97–117 (LGWP…AGLV).

This sequence belongs to the complex I subunit 3 family. As to quaternary structure, NDH-1 is composed of 14 different subunits. Subunits NuoA, H, J, K, L, M, N constitute the membrane sector of the complex.

It localises to the cell inner membrane. It catalyses the reaction a quinone + NADH + 5 H(+)(in) = a quinol + NAD(+) + 4 H(+)(out). Its function is as follows. NDH-1 shuttles electrons from NADH, via FMN and iron-sulfur (Fe-S) centers, to quinones in the respiratory chain. The immediate electron acceptor for the enzyme in this species is believed to be ubiquinone. Couples the redox reaction to proton translocation (for every two electrons transferred, four hydrogen ions are translocated across the cytoplasmic membrane), and thus conserves the redox energy in a proton gradient. This is NADH-quinone oxidoreductase subunit A from Anaeromyxobacter sp. (strain K).